The sequence spans 450 residues: Phosphoglucosamine mutase (450 aa).

Ser-101 acts as the Phosphoserine intermediate in catalysis. Mg(2+) is bound by residues Ser-101, Asp-240, Asp-242, and Asp-244. The residue at position 101 (Ser-101) is a Phosphoserine.

The protein belongs to the phosphohexose mutase family. It depends on Mg(2+) as a cofactor. In terms of processing, activated by phosphorylation. Phosphorylated by StkP in vivo.

It carries out the reaction alpha-D-glucosamine 1-phosphate = D-glucosamine 6-phosphate. Functionally, catalyzes the conversion of glucosamine-6-phosphate to glucosamine-1-phosphate. This chain is Phosphoglucosamine mutase, found in Streptococcus pneumoniae (strain ATCC BAA-255 / R6).